Here is a 693-residue protein sequence, read N- to C-terminus: Elongation factor G 1 (693 aa).

One can recognise a tr-type G domain in the interval 4–281 (NKLRNIGISA…AVTRFLPSPH (278 aa)). Residues 13–20 (AHIDSGKT), 80–84 (DTPGH), and 134–137 (NKCD) each bind GTP.

This sequence belongs to the TRAFAC class translation factor GTPase superfamily. Classic translation factor GTPase family. EF-G/EF-2 subfamily.

It is found in the cytoplasm. Functionally, catalyzes the GTP-dependent ribosomal translocation step during translation elongation. During this step, the ribosome changes from the pre-translocational (PRE) to the post-translocational (POST) state as the newly formed A-site-bound peptidyl-tRNA and P-site-bound deacylated tRNA move to the P and E sites, respectively. Catalyzes the coordinated movement of the two tRNA molecules, the mRNA and conformational changes in the ribosome. This is Elongation factor G 1 from Borreliella afzelii (strain PKo) (Borrelia afzelii).